The sequence spans 275 residues: Octanoyl-[GcvH]:protein N-octanoyltransferase (275 aa).

A BPL/LPL catalytic domain is found at 42-246 (GQSQPVVRLW…ALQAFGSRLE (205 aa)). Cys145 acts as the Acyl-thioester intermediate in catalysis.

It belongs to the octanoyltransferase LipL family.

The catalysed reaction is N(6)-octanoyl-L-lysyl-[glycine-cleavage complex H protein] + L-lysyl-[lipoyl-carrier protein] = N(6)-octanoyl-L-lysyl-[lipoyl-carrier protein] + L-lysyl-[glycine-cleavage complex H protein]. It participates in protein modification; protein lipoylation via endogenous pathway; protein N(6)-(lipoyl)lysine from octanoyl-[acyl-carrier-protein]. Functionally, catalyzes the amidotransfer (transamidation) of the octanoyl moiety from octanoyl-GcvH to the lipoyl domain of the E2 subunit of lipoate-dependent enzymes. The chain is Octanoyl-[GcvH]:protein N-octanoyltransferase from Anoxybacillus flavithermus (strain DSM 21510 / WK1).